The primary structure comprises 91 residues: Small ribosomal subunit protein bS20 (91 aa).

Residues 1-21 show a composition bias toward basic and acidic residues; sequence MPLHKSAEKRLRQSARRNERN. 2 disordered regions span residues 1-25 and 70-91; these read MPLH…RARK and PNKA…MKAE. Residues 70–79 show a composition bias toward basic residues; that stretch reads PNKASRKKSQ.

It belongs to the bacterial ribosomal protein bS20 family.

In terms of biological role, binds directly to 16S ribosomal RNA. This Chlorobium phaeobacteroides (strain BS1) protein is Small ribosomal subunit protein bS20.